The following is a 388-amino-acid chain: MNYQPTPEDRFTFGLWTVGWQGRDPFGDATRPALDPVEAVQRLAELGAYGVTFHDDDLIPFGSSDAEREAHVKRFRQALDATGMTVPMATTNLFTHPVFKDGAFTANDRDVRRYALRKTIRNIDLAVELGAKVYVAWGGREGAESGAAKDVRAALDRMKEAFDLLGEYVTSQGYDIRFAIEPKPNEPRGDILLPTIGHALAFIERLERPELYGVNPEVGHEQMAGLNFPHGIAQALWAGKLFHIDLNGQSGIKYDQDLRFGAGDLRAAFWLVDLLESAGWEGPRHFDFKPPRTEDIDGVWASAAGCMRNYLILKERAAAFRADPEVQEALRAARLDQLAEPTAADGLQALLADRTAYEDFDVDAAAARGMAFERLDQLAMDHLLGARG.

Active-site residues include His54 and Asp57. Positions 181, 217, 220, 245, 255, 257, and 287 each coordinate Mg(2+).

The protein belongs to the xylose isomerase family. In terms of assembly, homotetramer. Mg(2+) serves as cofactor.

It is found in the cytoplasm. It carries out the reaction alpha-D-xylose = alpha-D-xylulofuranose. This chain is Xylose isomerase, found in Streptomyces thermocyaneoviolaceus.